The sequence spans 664 residues: Acetylcholinesterase (664 aa).

Residues 1-29 form the signal peptide; the sequence is MFVNQRTRRPYMSVFVLVLGAAVICPAYG. The cysteines at positions 95 and 122 are disulfide-linked. N117 is a glycosylation site (N-linked (GlcNAc...) asparagine). S261 (acyl-ester intermediate) is an active-site residue. A disulfide bond links C315 and C330. N316 carries N-linked (GlcNAc...) asparagine glycosylation. Residues E390 and H504 each act as charge relay system in the active site. C466 and C588 are disulfide-bonded. Residue N517 is glycosylated (N-linked (GlcNAc...) asparagine). N647 carries the GPI-anchor amidated asparagine lipid modification. A propeptide spans 648 to 664 (removed in mature form); it reads KTPPHPQVILETRAFMH.

The protein belongs to the type-B carboxylesterase/lipase family. Homodimer; disulfide-linked.

Its subcellular location is the synapse. The protein localises to the cell membrane. It catalyses the reaction acetylcholine + H2O = choline + acetate + H(+). In terms of biological role, rapidly hydrolyzes choline released into the synapse. It can hydrolyze butyrylthiocholine. The polypeptide is Acetylcholinesterase (Anopheles stephensi (Indo-Pakistan malaria mosquito)).